Reading from the N-terminus, the 424-residue chain is UDP-N-acetylglucosamine 1-carboxyvinyltransferase (424 aa).

22-23 serves as a coordination point for phosphoenolpyruvate; the sequence is KN. Arginine 93 is a UDP-N-acetyl-alpha-D-glucosamine binding site. Cysteine 117 serves as the catalytic Proton donor. Cysteine 117 carries the 2-(S-cysteinyl)pyruvic acid O-phosphothioketal modification. Residues 162–165, aspartate 307, and isoleucine 329 contribute to the UDP-N-acetyl-alpha-D-glucosamine site; that span reads KVSV.

It belongs to the EPSP synthase family. MurA subfamily.

The protein resides in the cytoplasm. It carries out the reaction phosphoenolpyruvate + UDP-N-acetyl-alpha-D-glucosamine = UDP-N-acetyl-3-O-(1-carboxyvinyl)-alpha-D-glucosamine + phosphate. It functions in the pathway cell wall biogenesis; peptidoglycan biosynthesis. Functionally, cell wall formation. Adds enolpyruvyl to UDP-N-acetylglucosamine. This chain is UDP-N-acetylglucosamine 1-carboxyvinyltransferase, found in Actinobacillus pleuropneumoniae serotype 3 (strain JL03).